The sequence spans 876 residues: Bifunctional uridylyltransferase/uridylyl-removing enzyme (876 aa).

Residues 1–332 (MPYQSPITFQ…NNGEEAEAVI (332 aa)) are uridylyltransferase. A uridylyl-removing region spans residues 333–692 (IDDDFQRRGN…LSKKATRGGT (360 aa)). The HD domain occupies 451–573 (VDEHSIRLLK…VRDEERLEYL (123 aa)). 2 ACT domains span residues 693 to 777 (EVFI…RIPR) and 800 to 876 (LMEF…PSAQ).

Belongs to the GlnD family. It depends on Mg(2+) as a cofactor.

It catalyses the reaction [protein-PII]-L-tyrosine + UTP = [protein-PII]-uridylyl-L-tyrosine + diphosphate. The enzyme catalyses [protein-PII]-uridylyl-L-tyrosine + H2O = [protein-PII]-L-tyrosine + UMP + H(+). Uridylyltransferase (UTase) activity is inhibited by glutamine, while glutamine activates uridylyl-removing (UR) activity. Functionally, modifies, by uridylylation and deuridylylation, the PII regulatory proteins (GlnB and homologs), in response to the nitrogen status of the cell that GlnD senses through the glutamine level. Under low glutamine levels, catalyzes the conversion of the PII proteins and UTP to PII-UMP and PPi, while under higher glutamine levels, GlnD hydrolyzes PII-UMP to PII and UMP (deuridylylation). Thus, controls uridylylation state and activity of the PII proteins, and plays an important role in the regulation of nitrogen assimilation and metabolism. The polypeptide is Bifunctional uridylyltransferase/uridylyl-removing enzyme (Vibrio cholerae serotype O1 (strain ATCC 39315 / El Tor Inaba N16961)).